We begin with the raw amino-acid sequence, 211 residues long: MEVSMPLPQIYVEKTLALIKPDVVDKEEEIQDIILGSGFTIIQRRKLHLSPEHCSNFYVEQYGKMFFPNLTAYMSSGPLVAMILARHKAISYWKELMGPSNSLVAKETHPDSLRAIYGTDELRNALHGSNDFAASEREIRFMFPAVIIEPIPIGQAAKDYINLYVAPTLLQGLTELCKEKPPDPYLWLADWLMKNNPNKPKLCHFPVTEEP.

The segment at 13–145 is NDK; it reads EKTLALIKPD…EREIRFMFPA (133 aa).

Belongs to the NDK family. As to quaternary structure, component of the axonemal radial spoke complex 1 (RS1), at least composed of spoke head proteins RSPH1, RSPH3, RSPH9 and the cilia-specific component RSPH4A or sperm-specific component RSPH6A, spoke stalk proteins RSPH14, DNAJB13, DYDC1, ROPN1L and NME5, and the anchor protein IQUB. Interacts with IQUB. Expressed in the trachea, ependymal cells and oviduct (at protein level). Expressed predominantly in germ cells of the testis. Not expressed in testicular somatic cells.

Its subcellular location is the cell projection. The protein localises to the cilium. It is found in the cytoplasm. The protein resides in the cytoskeleton. It localises to the flagellum axoneme. Functions as part of axonemal radial spoke complexes that play an important part in the motility of sperm and cilia. Does not seem to have nucleoside diphosphate kinase (NDPK) activity. Confers protection from cell death by BAX and alters the cellular levels of several antioxidant enzymes including GPX5. May play a role in spermiogenesis by increasing the ability of late-stage spermatids to eliminate reactive oxygen species. In Mus musculus (Mouse), this protein is Nucleoside diphosphate kinase homolog 5 (Nme5).